The sequence spans 505 residues: Ent-kaurene oxidase 2 (505 aa).

A helical membrane pass occupies residues 3 to 23; that stretch reads AFVPGGAGAAAAAVGGFVAAA. Position 449 (C449) interacts with heme.

This sequence belongs to the cytochrome P450 family. It depends on heme as a cofactor. In terms of tissue distribution, widely expressed.

Its subcellular location is the membrane. The enzyme catalyses ent-kaur-16-ene + 3 reduced [NADPH--hemoprotein reductase] + 3 O2 = ent-kaur-16-en-19-oate + 3 oxidized [NADPH--hemoprotein reductase] + 4 H2O + 4 H(+). It functions in the pathway plant hormone biosynthesis; gibberellin biosynthesis. Its function is as follows. Catalyzes three successive oxidations of the 4-methyl group of ent-kaurene giving kaurenoic acid, a key step in gibberellins (GAs) biosynthesis. GAs, which are involved many processes, including stem elongation, play a central role in plant development. This chain is Ent-kaurene oxidase 2, found in Oryza sativa subsp. japonica (Rice).